A 673-amino-acid chain; its full sequence is Citrate exporter 1 (673 aa).

The segment at 1–44 (MFNLNTKSSKEPEVTEVAVDSTPSSPVTRESSPESSPDNSAVDL) is disordered. The segment covering 21–39 (STPSSPVTRESSPESSPDN) has biased composition (polar residues). Residues 67-87 (FLVFGAMAFCMLVSFMDQNGI) traverse the membrane as a helical segment. The N-linked (GlcNAc...) asparagine glycan is linked to N99. Helical transmembrane passes span 103–123 (TISW…VLYG), 133–153 (LVFM…ACAQ), 164–184 (FSGI…SDIV), and 194–214 (GILG…GAAF). N-linked (GlcNAc...) asparagine glycosylation occurs at N217. Transmembrane regions (helical) follow at residues 222–242 (AIFY…FFIL), 261–281 (PGLF…AGGG), 292–312 (ISML…EGFF), 322–342 (IFGT…GIAY), 364–384 (AAGM…ISGQ), 393–413 (LEVI…KCFW), 419–439 (MALL…CFQP), and 465–485 (SFGG…SLKA). Residue N526 is glycosylated (N-linked (GlcNAc...) asparagine). Residues 529–549 (HTVFVFLCPIVGACLLVTVFV) form a helical membrane-spanning segment. Residues 564–596 (AKTVEDKDKDESGTDCEDMTKGEVLVSEKEGKL) show a composition bias toward basic and acidic residues. Disordered regions lie at residues 564–608 (AKTV…MHFG) and 636–673 (FPPM…IQEE). Residues N599 and N662 are each glycosylated (N-linked (GlcNAc...) asparagine).

It belongs to the major facilitator superfamily.

It is found in the cell membrane. The catalysed reaction is citrate(in) = citrate(out). In terms of biological role, transmembrane transporter that exports citrate across the cell membrane. This Yarrowia lipolytica (strain CLIB 122 / E 150) (Yeast) protein is Citrate exporter 1.